We begin with the raw amino-acid sequence, 450 residues long: MRRLRFSPRSSFARTLLLIVTLLFASLVTTYLVVLNFAILPSLQQFNKVLAYEVRMLMTDKLQLEDGTQLVVPPAFRREIYRELGISLYSNEAAEEAGLRWAQHYEFLSHQMAQQLGGPTEVRVEVNKSSPVVWLKTWLSPNIWVRVPLTEIHQGDFSPLFRYTLAIMLLAIGGAWLFIRIQNRPLVDLEHAALQVGKGIIPPPLREYGASEVRSVTRAFNHMAAGVKQLADDRTLLMAGVSHDLRTPLTRIRLATEMMSEQDGYLAESINKDIEECNAIIEQFIDYLRTGQEMPMEMADLNAVLGEVIAAESGYEREIETALYPGSIEVKMHPLSIKRAVANMVVNAARYGNGWIKVSSGTEPNRAWFQVEDDGPGIAPEQRKHLFQPFVRGDSARTISGTGLGLAIVQRIVDNHNGMLELGTSERGGLSIRAWLPVPVTRAQGTTKEG.

At 1–15 the chain is on the cytoplasmic side; the sequence is MRRLRFSPRSSFART. A helical membrane pass occupies residues 16–35; the sequence is LLLIVTLLFASLVTTYLVVL. At 36–158 the chain is on the periplasmic side; it reads NFAILPSLQQ…LTEIHQGDFS (123 aa). A polyP-periplasmic motif motif is present at residues 71 to 75; it reads VVPPA. Residues 159-179 form a helical membrane-spanning segment; the sequence is PLFRYTLAIMLLAIGGAWLFI. The HAMP domain occupies 180–232; sequence RIQNRPLVDLEHAALQVGKGIIPPPLREYGASEVRSVTRAFNHMAAGVKQLAD. Over 180-450 the chain is Cytoplasmic; sequence RIQNRPLVDL…TRAQGTTKEG (271 aa). A polyP-cytoplasmic motif motif is present at residues 201–205; sequence IPPPL. Residues 223–289 are cytoplasmic dimerization domain (CDD), when dimerized forms osmosensitive core; the sequence is MAAGVKQLAD…IIEQFIDYLR (67 aa). The Histidine kinase domain maps to 240-440; sequence GVSHDLRTPL…SIRAWLPVPV (201 aa). Residues histidine 243, 347–351, aspartate 373, 392–393, and 402–406 each bind ATP; these read NAARY, RG, and TGLGL. Histidine 243 is modified (phosphohistidine; by autocatalysis).

In terms of assembly, homodimer. Interacts with MzrA. Autophosphorylated. Incubation of isolated EnvZ C-terminal fragment (residues 180-450) with increasing levels of NaCl or sucrose increases its autophosphorylation.

Its subcellular location is the cell inner membrane. The catalysed reaction is ATP + protein L-histidine = ADP + protein N-phospho-L-histidine.. Activity is modulated by MzrA. In the presence of 0.2 M NaCl, 2.0 mM sodium cholate (bile salts) decreases expression from the ompC promoter; how this is mediated is unknown. Autophosphorylation is inhibited by the angucycline antibiotic waldiomycin in a non-competitive manner; waldiomycin prevents dimerization of the cytoplasmic domain and autophosphorylation. Member of the two-component regulatory system EnvZ/OmpR involved in osmoregulation (particularly of genes ompF and ompC) as well as other genes. EnvZ functions as a membrane-associated protein kinase that phosphorylates OmpR in response to environmental signals; at low osmolarity OmpR activates ompF transcription, while at high osmolarity it represses ompF and activates ompC transcription. Also dephosphorylates OmpR in the presence of ATP. The cytoplasmic dimerization domain (CDD) forms an osmosensitive core; increasing osmolarity stabilizes this segment (possibly by its contraction), enhancing the autophosphorylation rate and consequently, downstream phosphotransfer to OmpR and signaling. Autophosphorylation is greater when full-length EnvZ is reconstituted in a lipid environment, lipid-mediated allostery impacts the kinase function of EnvZ. Involved in acid stress response; this requires EnvZ but not OmpR phosphorylation, and suggests that EnvZ senses cytoplasmic acidic pH. This chain is Sensor histidine kinase EnvZ (envZ), found in Escherichia coli (strain K12).